We begin with the raw amino-acid sequence, 410 residues long: Peptide chain release factor subunit 1 (410 aa).

This sequence belongs to the eukaryotic release factor 1 family. In terms of assembly, heterodimer of two subunits, one of which binds GTP.

Its subcellular location is the cytoplasm. Its function is as follows. Directs the termination of nascent peptide synthesis (translation) in response to the termination codons UAA, UAG and UGA. In Picrophilus torridus (strain ATCC 700027 / DSM 9790 / JCM 10055 / NBRC 100828 / KAW 2/3), this protein is Peptide chain release factor subunit 1.